Consider the following 715-residue polypeptide: Formate dehydrogenase H (715 aa).

Residues 1-56 enclose the 4Fe-4S Mo/W bis-MGD-type domain; sequence MKKVVTVCPYCASGCKINLVVDNGKIVRAEAAQGKTNQGTLCLKGYYGWDFINDTQ. Cysteine 8, cysteine 11, cysteine 15, and cysteine 42 together coordinate [4Fe-4S] cluster. Lysine 44 serves as the catalytic Electron donor/acceptor. Mo-bis(molybdopterin guanine dinucleotide) is bound by residues arginine 110, selenocysteine 140, asparagine 176, aspartate 179, serine 180, cysteine 201, aspartate 202, arginine 204, glycine 221, asparagine 223, methionine 297, glutamine 335, aspartate 404, threonine 408, glutamine 428, aspartate 429, serine 445, aspartate 478, arginine 581, glutamate 582, histidine 585, serine 587, tyrosine 678, and lysine 679. Catalysis depends on selenocysteine 140, which acts as the Proton donor/acceptor. Residue selenocysteine 140 is a non-standard amino acid, selenocysteine.

Belongs to the prokaryotic molybdopterin-containing oxidoreductase family. As to quaternary structure, consists of two separable enzymatic activities: a formate dehydrogenase component (FDH-H) and hydrogenase-3. The cofactor is [4Fe-4S] cluster. Mo-bis(molybdopterin guanine dinucleotide) is required as a cofactor.

It carries out the reaction formate + A + H(+) = AH2 + CO2. Inhibited by aerobic conditions. Functionally, decomposes formic acid to hydrogen and carbon dioxide under anaerobic conditions in the absence of exogenous electron acceptors. The protein is Formate dehydrogenase H (fdhF) of Escherichia coli (strain K12).